A 133-amino-acid polypeptide reads, in one-letter code: Small ribosomal subunit protein uS8 (133 aa).

Belongs to the universal ribosomal protein uS8 family. As to quaternary structure, part of the 30S ribosomal subunit. Contacts proteins S5 and S12.

In terms of biological role, one of the primary rRNA binding proteins, it binds directly to 16S rRNA central domain where it helps coordinate assembly of the platform of the 30S subunit. In Chlamydia caviae (strain ATCC VR-813 / DSM 19441 / 03DC25 / GPIC) (Chlamydophila caviae), this protein is Small ribosomal subunit protein uS8.